The following is a 569-amino-acid chain: Endonuclease/exonuclease/phosphatase family domain-containing protein 1 (569 aa).

The N-myristoyl glycine moiety is linked to residue Gly2. Residues Ser16 and Ser25 each carry the phosphoserine modification. The 30-residue stretch at 38-67 (ERLNINTATEEELMTLPGVTRAVARSIVEY) folds into the HhH domain. Phosphoserine is present on residues Ser106, Ser110, Ser160, and Ser173. The tract at residues 200–224 (SRPPSTHTNGGLTFTAKPHPSPTSL) is disordered. Residues 202-211 (PPSTHTNGGL) are compositionally biased toward polar residues. At Thr265 the chain carries Phosphothreonine. The disordered stretch occupies residues 549-569 (VPRNGNGVTLEPSEANIKHER).

In Mus musculus (Mouse), this protein is Endonuclease/exonuclease/phosphatase family domain-containing protein 1 (Eepd1).